A 640-amino-acid polypeptide reads, in one-letter code: Biosynthetic arginine decarboxylase (640 aa).

N6-(pyridoxal phosphate)lysine is present on Lys-109. Substrate is bound at residue 291–301; that stretch reads LDVGGGLGVDY.

The protein belongs to the Orn/Lys/Arg decarboxylase class-II family. SpeA subfamily. The cofactor is Mg(2+). It depends on pyridoxal 5'-phosphate as a cofactor.

The catalysed reaction is L-arginine + H(+) = agmatine + CO2. It participates in amine and polyamine biosynthesis; agmatine biosynthesis; agmatine from L-arginine: step 1/1. Its function is as follows. Catalyzes the biosynthesis of agmatine from arginine. The chain is Biosynthetic arginine decarboxylase from Synechococcus sp. (strain RCC307).